Reading from the N-terminus, the 134-residue chain is Major capsid protein (134 aa).

In terms of assembly, homodimer.

The protein resides in the virion. Functionally, self-assembles to form a helical, filamentous nucleocapsid. The capsid proteins wrap around the DNA and maintain it in an A-form by non-specific desolvation and specific coordination of the DNA phosphate groups by positively charged residues. This certainly protects the viral DNA under conditions such as the extreme desiccation of its host. The sequence is that of Major capsid protein from Saccharolobus islandicus (Sulfolobus islandicus).